A 370-amino-acid polypeptide reads, in one-letter code: Chorismate synthase (370 aa).

Residues Arg-48 and Arg-54 each contribute to the NADP(+) site. FMN contacts are provided by residues 130–132, 242–243, Gly-287, 302–306, and Arg-328; these read RSS, NA, and KPTSS.

Belongs to the chorismate synthase family. In terms of assembly, homotetramer. Requires FMNH2 as cofactor.

It catalyses the reaction 5-O-(1-carboxyvinyl)-3-phosphoshikimate = chorismate + phosphate. The protein operates within metabolic intermediate biosynthesis; chorismate biosynthesis; chorismate from D-erythrose 4-phosphate and phosphoenolpyruvate: step 7/7. Its function is as follows. Catalyzes the anti-1,4-elimination of the C-3 phosphate and the C-6 proR hydrogen from 5-enolpyruvylshikimate-3-phosphate (EPSP) to yield chorismate, which is the branch point compound that serves as the starting substrate for the three terminal pathways of aromatic amino acid biosynthesis. This reaction introduces a second double bond into the aromatic ring system. The protein is Chorismate synthase of Xanthobacter autotrophicus (strain ATCC BAA-1158 / Py2).